The chain runs to 489 residues: MQVKILDTTLRDGEQTPGVSLSVEQKVMIAEALDNLGVDIIEAGTAIASEGDFQAIKEISQRGLNAEICSFARIKREDIDAAADAGAESIFMVAPSSDIHINAKFPGKDRDYVIEKSVEAIEYAKERGLIVEFGAEDASRADLDFVIQLFKRAEEAKADRITFADTVGVLSPEKMEEIVRKIKAKVKLPLAIHCHDDFGLATANTIFGIKAGAEEFHGTINGLGERAGNAAIEEVVIALEYLYGIKTKIKKERLYNTSKLVEKLSRVVVPPNKPIVGDNAFTHESGIHTSALFRDAKSYEPISPEVVGRKRVIVLGKHAGRASVEAIMNELGYKATPEQMKEILARIKEIGDKGKRVTDADVRTIIETVLQIKREKKVKLEDLAIFSGKNVMPMASVKLKIDGQERIEAAVGLGPVDAAINAIRRAIKEFADIKLVSYHVDAITGGTDALVDVVVQLKKDNKIVTARGARTDIIMASVEAFIEGINMLF.

Residues 3 to 255 (VKILDTTLRD…KTKIKKERLY (253 aa)) enclose the Pyruvate carboxyltransferase domain.

Belongs to the alpha-IPM synthase/homocitrate synthase family. Homodimer.

The catalysed reaction is pyruvate + acetyl-CoA + H2O = (3R)-citramalate + CoA + H(+). It functions in the pathway amino-acid biosynthesis; L-isoleucine biosynthesis; 2-oxobutanoate from pyruvate: step 1/3. Catalyzes the condensation of pyruvate and acetyl-coenzyme A to form (R)-citramalate. The protein is Putative (R)-citramalate synthase CimA (cimA) of Archaeoglobus fulgidus (strain ATCC 49558 / DSM 4304 / JCM 9628 / NBRC 100126 / VC-16).